The sequence spans 289 residues: (3R)-3-[(carboxymethyl)amino]fatty acid oxygenase/decarboxylase (289 aa).

Tyr-65, Tyr-70, and Gly-93 together coordinate a (3R)-3-[(carboxymethyl)amino]fatty acid. Fe(2+) contacts are provided by His-97 and Asp-99. A (3R)-3-[(carboxymethyl)amino]fatty acid is bound by residues Tyr-100 and Lys-158. A Fe(2+)-binding site is contributed by His-260. 2-oxoglutarate is bound at residue His-264. Arg-275 is an a (3R)-3-[(carboxymethyl)amino]fatty acid binding site.

It belongs to the TfdA dioxygenase family. The cofactor is Fe(2+).

It carries out the reaction a (3R)-3-[(carboxymethyl)amino]fatty acid + 2 2-oxoglutarate + 2 O2 = a (3R)-3-isocyanyl-fatty acid + 2 succinate + 3 CO2 + 2 H2O. It catalyses the reaction a (3R)-3-[(carboxymethyl)amino]fatty acid + 2-oxoglutarate + O2 = a (3R)-3-{[carboxy(hydroxy)methyl]amino}fatty acid + succinate + CO2. The catalysed reaction is a (3R)-3-{[carboxy(hydroxy)methyl]amino}fatty acid + 2-oxoglutarate + O2 = a (3R)-3-isocyanyl-fatty acid + succinate + 2 CO2 + 2 H2O. Involved in the biosynthesis of a unique class of isonitrile lipopeptides (INLPs) that seem to play a role in metal acquisition. Catalyzes the conversion of (3R)-3-[(carboxymethyl)amino]fatty acids to (3R)-3-isocyanyl-fatty acids through an oxidative decarboxylation mechanism, thereby generating the isonitrile group of INLPs. In Mycobacterium bovis (strain ATCC BAA-935 / AF2122/97), this protein is (3R)-3-[(carboxymethyl)amino]fatty acid oxygenase/decarboxylase.